A 632-amino-acid chain; its full sequence is 1-deoxy-D-xylulose-5-phosphate synthase (632 aa).

Thiamine diphosphate-binding positions include histidine 79 and 120–122 (GHA). Aspartate 152 is a binding site for Mg(2+). Thiamine diphosphate contacts are provided by residues 153–154 (GS), asparagine 181, phenylalanine 293, and glutamate 377. Asparagine 181 is a Mg(2+) binding site.

The protein belongs to the transketolase family. DXPS subfamily. In terms of assembly, homodimer. Mg(2+) is required as a cofactor. Requires thiamine diphosphate as cofactor.

The enzyme catalyses D-glyceraldehyde 3-phosphate + pyruvate + H(+) = 1-deoxy-D-xylulose 5-phosphate + CO2. It participates in metabolic intermediate biosynthesis; 1-deoxy-D-xylulose 5-phosphate biosynthesis; 1-deoxy-D-xylulose 5-phosphate from D-glyceraldehyde 3-phosphate and pyruvate: step 1/1. Functionally, catalyzes the acyloin condensation reaction between C atoms 2 and 3 of pyruvate and glyceraldehyde 3-phosphate to yield 1-deoxy-D-xylulose-5-phosphate (DXP). This Phocaeicola vulgatus (strain ATCC 8482 / DSM 1447 / JCM 5826 / CCUG 4940 / NBRC 14291 / NCTC 11154) (Bacteroides vulgatus) protein is 1-deoxy-D-xylulose-5-phosphate synthase.